The following is a 487-amino-acid chain: GTPase Der (487 aa).

EngA-type G domains follow at residues Pro-3–Met-166 and Ile-199–Thr-372. GTP-binding positions include Gly-9–Ser-16, Asp-56–Ile-60, Asn-118–Asp-121, Gly-205–Ser-212, Asp-252–Val-256, and Asn-317–Asp-320. A KH-like domain is found at Arg-373–Asp-457.

It belongs to the TRAFAC class TrmE-Era-EngA-EngB-Septin-like GTPase superfamily. EngA (Der) GTPase family. In terms of assembly, associates with the 50S ribosomal subunit.

GTPase that plays an essential role in the late steps of ribosome biogenesis. The polypeptide is GTPase Der (Shewanella oneidensis (strain ATCC 700550 / JCM 31522 / CIP 106686 / LMG 19005 / NCIMB 14063 / MR-1)).